Consider the following 242-residue polypeptide: Basic agglutinin (242 aa).

2 N-linked (GlcNAc...) asparagine glycosylation sites follow: N45 and N220.

It belongs to the leguminous lectin family.

In terms of biological role, lectin. This Psophocarpus tetragonolobus (Winged bean) protein is Basic agglutinin (WBAI).